A 495-amino-acid polypeptide reads, in one-letter code: MKVEVMSSHRVHPEHKKASEETAILPVIDSWYCYWRTLAAIYLFDAYSGPELYTDLRQSLSKTLDDFPQLAGTLDNCNIQVEDKSGRSVRRTRVTWGGNTLGGEFIEAKTNARVRSLLPPSIQNISSFAWDRSDRTLRPLFPATLPETSGIRVQVTSFKCGGFGIALDMDHALADAHTVGLFIGHWSAIHTRMFTSTTTFPSQISLPNVMFNPQFVEKKVHETDNTYGSKMVMLDRARELPTRRPDLRDKSSQRTMQGNMFKPPPKPSAGVPYLLHFSASEYERITRGIQQATASPQITDQVAFVSFLWAALNKARARCSVGQAVDLHLPTSFRWTLGLPEGLIGSPLVAVMMDGGPDGEVCYTDPVVLATIITKTLERYTEDALLAIVYDASLRDSPASMLRGFERRERMEFTSGVGFGSDKLSFGCHSPVFVGPIILPVDNLFIMAEGMRTSEAHSSKWYKHGANIFVSLPQDVFRALLADPALINVELLGDI.

The active-site Proton acceptor is H171.

The protein belongs to the plant acyltransferase family.

Acyltransferase; part of the gene cluster that mediates the biosynthesis of abscisic acid (ABA), a phytohormone that acts antagonistically toward salicylic acid (SA), jasmonic acid (JA) and ethylene (ETH) signaling, to impede plant defense responses. The first step of the pathway catalyzes the reaction from farnesyl diphosphate to alpha-ionylideneethane performed by the alpha-ionylideneethane synthase abl3 via a three-step reaction mechanism involving 2 neutral intermediates, beta-farnesene and allofarnesene. The cytochrome P450 monooxygenase abl1 might then be involved in the conversion of alpha-ionylideneethane to alpha-ionylideneacetic acid. Alpha-ionylideneacetic acid is further converted to abscisic acid in 2 steps involving the cytochrome P450 monooxygenase abl2 and the short-chain dehydrogenase/reductase abl4, via the intermediates 1'-deoxy-ABA or 1',4'-trans-diol-ABA, depending on the order of action of these 2 enzymes. Abl2 is responsible for the hydroxylation of carbon atom C-1' and abl4 might be involved in the oxidation of the C-4' carbon atom. The acyltransferase abl6 seems not essential for the biosynthesis of ABA, but it may acetylate ABA as part of the synthesis of another ABA-related molecule. This chain is Acyltransferase abl6, found in Leptosphaeria maculans (strain JN3 / isolate v23.1.3 / race Av1-4-5-6-7-8) (Blackleg fungus).